A 198-amino-acid chain; its full sequence is Septum-promoting GTP-binding protein 1 (198 aa).

The segment at 6–198 (KNNVTIKVGM…GDPILEYIDR (193 aa)) is small GTPase-like. GTP-binding positions include 17-24 (GDSSIGKT), 65-69 (DLGGQ), and 122-125 (TKYD).

As to quaternary structure, interacts with cdc7 and cdc11.

In terms of biological role, GTP-binding protein essential for the induction of septum formation at G2 and pre-START stages of mitosis. Acts via the cdc7 protein kinase pathway. The polypeptide is Septum-promoting GTP-binding protein 1 (spg1) (Schizosaccharomyces pombe (strain 972 / ATCC 24843) (Fission yeast)).